Here is a 550-residue protein sequence, read N- to C-terminus: MIQLSPLLLLPLFSVFNSIADASTEYLRPQIHLTPDQGWMNDPNGMFYDRKDKLWHVYFQHNPDKKSIWATPVTWGHSTSKDLLTWDYHGNALEPENDDEGIFSGSVVVDRNNTSGFFNDSTDPEQRIVAIYTNNAQLQTQEIAYSLDKGYSFIKYDQNPVINVNSSQQRDPKVLWHDESNQWIMVVAKTQEFKVQIYGSPDLKKWDLKSNFTSNGYLGFQYECPGLFKLPIENPLNDTVTSKWVLLLAINPGSPLGGSINEYFIGDFDGTTFHPDDGATRFMDIGKDFYAFQSFDNTEPEDGALGLAWASNWQYANTVPTENWRSSMSLVRNYTLKYVDVNPENYGLTLIQKPVYDTKETRLNETLKTLETINEYEVNDLKLDKSSFVATDFNTERNATGVFEFDLKFTQTDLKMGYSNMTTQFGLYIHSQTVKGSQETLQLVFDTLSTTWYIDRTTQHSFQRNSPVFTERISTYVEKIDTTDQGNVYTLYGVVDRNILELYFNDGSIAMTNTFFFREGKIPTSFEVVCDSEKSFITIDELSVRELARK.

The first 22 residues, 1–22 (MIQLSPLLLLPLFSVFNSIADA), serve as a signal peptide directing secretion. Substrate contacts are provided by residues 39–42 (WMND), Gln-60, and 103–104 (FS). Residue Asp-42 is part of the active site. N-linked (GlcNAc...) asparagine glycosylation is found at Asn-112, Asn-113, Asn-119, and Asn-165. A substrate-binding site is contributed by 170 to 171 (RD). N-linked (GlcNAc...) asparagine glycosylation is present at Asn-211. Glu-223 lines the substrate pocket. A glycan (N-linked (GlcNAc...) asparagine) is linked at Asn-237. Trp-313 serves as a coordination point for substrate. Asn-333, Asn-364, Asn-398, and Asn-420 each carry an N-linked (GlcNAc...) asparagine glycan.

The protein belongs to the glycosyl hydrolase 32 family.

It catalyses the reaction Hydrolysis of terminal non-reducing beta-D-fructofuranoside residues in beta-D-fructofuranosides.. This Wickerhamomyces anomalus (Yeast) protein is Invertase (INV1).